An 89-amino-acid polypeptide reads, in one-letter code: Small ribosomal subunit protein uS15 (89 aa).

The protein belongs to the universal ribosomal protein uS15 family. As to quaternary structure, part of the 30S ribosomal subunit. Forms a bridge to the 50S subunit in the 70S ribosome, contacting the 23S rRNA.

Functionally, one of the primary rRNA binding proteins, it binds directly to 16S rRNA where it helps nucleate assembly of the platform of the 30S subunit by binding and bridging several RNA helices of the 16S rRNA. Its function is as follows. Forms an intersubunit bridge (bridge B4) with the 23S rRNA of the 50S subunit in the ribosome. This Anoxybacillus flavithermus (strain DSM 21510 / WK1) protein is Small ribosomal subunit protein uS15.